Here is a 260-residue protein sequence, read N- to C-terminus: Ribosomal RNA small subunit methyltransferase J (260 aa).

S-adenosyl-L-methionine-binding positions include 125-126 (ER) and Asp179.

Belongs to the methyltransferase superfamily. RsmJ family.

It localises to the cytoplasm. It carries out the reaction guanosine(1516) in 16S rRNA + S-adenosyl-L-methionine = N(2)-methylguanosine(1516) in 16S rRNA + S-adenosyl-L-homocysteine + H(+). Specifically methylates the guanosine in position 1516 of 16S rRNA. This chain is Ribosomal RNA small subunit methyltransferase J, found in Pseudomonas fluorescens (strain Pf0-1).